The following is a 294-amino-acid chain: Protease HtpX homolog (294 aa).

Transmembrane regions (helical) follow at residues 12 to 32 and 34 to 54; these read VLFG…ASSF and SPGV…YSYW. Residue His138 coordinates Zn(2+). Glu139 is a catalytic residue. Zn(2+) is bound at residue His142. 2 helical membrane passes run 152-172 and 188-208; these read SVAG…VFFG and LALL…QLAI. Glu213 is a binding site for Zn(2+).

It belongs to the peptidase M48B family. The cofactor is Zn(2+).

It localises to the cell membrane. This chain is Protease HtpX homolog, found in Kineococcus radiotolerans (strain ATCC BAA-149 / DSM 14245 / SRS30216).